The primary structure comprises 71 residues: SRY-related protein LG27 (71 aa).

The HMG box DNA-binding region spans 1-68 (VKRPMNAFMV…KHMADYPNYK (68 aa)).

The protein localises to the nucleus. This Eublepharis macularius (Leopard gecko) protein is SRY-related protein LG27.